A 602-amino-acid chain; its full sequence is Zinc finger MYND domain-containing protein 11 (602 aa).

Residues 6-82 form the SAMD1-like winged helix (WH) domain; the sequence is KRRQADTKAI…CKGSKAGIEQ (77 aa). The PHD-type zinc-finger motif lies at 100-148; it reads DWYCFECHLPGEVLICDLCFRVYHSKCLSDEFRLRDSSSHWQCPVCRSI. Residues 149–255 form the Bromo domain; the sequence is KKKHSNKQEM…KDTCHELDEL (107 aa). Zn(2+)-binding residues include Cys258, Cys261, Cys277, and His281. Residues 280-331 form the PWWP domain; sequence NHELVWAKMKGFGFWPAKVMQKEDNQVDVRFFGHHHQRAWIPSENIQDITVN. The aromatic cage required for H3.3K36me3-specific binding stretch occupies residues 291–310; sequence FGFWPAKVMQKEDNQVDVRF. Lys366 participates in a covalent cross-link: Glycyl lysine isopeptide (Lys-Gly) (interchain with G-Cter in SUMO2). A disordered region spans residues 366 to 461; the sequence is KNEDRGEEEA…HRSTQTTSDG (96 aa). Residues 394 to 400 carry the Nuclear localization signal motif; it reads RAKKGRR. Glycyl lysine isopeptide (Lys-Gly) (interchain with G-Cter in SUMO2) cross-links involve residues Lys407 and Lys408. Ser421 is subject to Phosphoserine. Polar residues predominate over residues 435 to 461; the sequence is SVSTQTKKLSASSPRMLHRSTQTTSDG. Zn(2+) is bound by residues Cys563, Cys566, Cys574, Cys575, Cys581, Cys585, His594, and Cys598. The segment at 563–598 adopts an MYND-type zinc-finger fold; it reads CYNCEEEAMYHCCWNTSYCSIKCQQEHWHAEHKRTC.

Homooligomer; forms homooligomers via its C-terminus. Interacts with histone H3.3 trimethylated at 'Lys-36' (H3.3K36me3). Interacts (via MYND-type zinc finger) with NCOR1. Interacts (via MYND-type zinc finger) with MGA protein (via PXLXP motif). Interacts (via MYND-type zinc finger) with EZH2. Interacts with EMSY and E2F6. Interacts with PIAS1 and UBE2I. Post-translationally, ubiquitinated, leading to proteasomal degradation. Sumoylated following its interaction with PIAS1 and UBE2I.

It localises to the nucleus. Its subcellular location is the chromosome. Functionally, chromatin reader that specifically recognizes and binds histone H3.3 trimethylated at 'Lys-36' (H3.3K36me3) and regulates RNA polymerase II elongation. Does not bind other histone H3 subtypes (H3.1 or H3.2). Colocalizes with highly expressed genes and functions as a transcription corepressor by modulating RNA polymerase II at the elongation stage. Binds non-specifically to dsDNA. Acts as a tumor-suppressor by repressing a transcriptional program essential for tumor cell growth. This is Zinc finger MYND domain-containing protein 11 (Zmynd11) from Mus musculus (Mouse).